Consider the following 173-residue polypeptide: Shikimate kinase 1 (173 aa).

14 to 19 (GAGKST) is an ATP binding site. Mg(2+) is bound at residue Ser-18. Residues Asp-36, Arg-60, and Gly-82 each contribute to the substrate site. Residue Arg-120 coordinates ATP. Arg-140 contacts substrate. An ATP-binding site is contributed by Gln-157.

Belongs to the shikimate kinase family. In terms of assembly, monomer. Mg(2+) is required as a cofactor.

The protein localises to the cytoplasm. It catalyses the reaction shikimate + ATP = 3-phosphoshikimate + ADP + H(+). It functions in the pathway metabolic intermediate biosynthesis; chorismate biosynthesis; chorismate from D-erythrose 4-phosphate and phosphoenolpyruvate: step 5/7. Its function is as follows. Catalyzes the specific phosphorylation of the 3-hydroxyl group of shikimic acid using ATP as a cosubstrate. This Salmonella typhimurium (strain LT2 / SGSC1412 / ATCC 700720) protein is Shikimate kinase 1.